Consider the following 195-residue polypeptide: ATP-dependent Clp protease proteolytic subunit 2 (195 aa).

Residue Ser98 is the Nucleophile of the active site. His123 is a catalytic residue.

It belongs to the peptidase S14 family. As to quaternary structure, fourteen ClpP subunits assemble into 2 heptameric rings which stack back to back to give a disk-like structure with a central cavity, resembling the structure of eukaryotic proteasomes.

It localises to the cytoplasm. The enzyme catalyses Hydrolysis of proteins to small peptides in the presence of ATP and magnesium. alpha-casein is the usual test substrate. In the absence of ATP, only oligopeptides shorter than five residues are hydrolyzed (such as succinyl-Leu-Tyr-|-NHMec, and Leu-Tyr-Leu-|-Tyr-Trp, in which cleavage of the -Tyr-|-Leu- and -Tyr-|-Trp bonds also occurs).. In terms of biological role, cleaves peptides in various proteins in a process that requires ATP hydrolysis. Has a chymotrypsin-like activity. Plays a major role in the degradation of misfolded proteins. The sequence is that of ATP-dependent Clp protease proteolytic subunit 2 from Rhodopirellula baltica (strain DSM 10527 / NCIMB 13988 / SH1).